A 180-amino-acid chain; its full sequence is 3-hydroxyanthranilate 3,4-dioxygenase (180 aa).

R44 serves as a coordination point for O2. 3 residues coordinate Fe cation: H48, E54, and H92. Substrate is bound at residue E54. Positions 96 and 106 each coordinate substrate. Residues C121, C124, C158, and C161 each coordinate a divalent metal cation.

This sequence belongs to the 3-HAO family. It depends on Fe(2+) as a cofactor.

The protein resides in the cytoplasm. The enzyme catalyses 3-hydroxyanthranilate + O2 = (2Z,4Z)-2-amino-3-carboxymuconate 6-semialdehyde. Its pathway is cofactor biosynthesis; NAD(+) biosynthesis; quinolinate from L-kynurenine: step 3/3. Catalyzes the oxidative ring opening of 3-hydroxyanthranilate to 2-amino-3-carboxymuconate semialdehyde, which spontaneously cyclizes to quinolinate. The protein is 3-hydroxyanthranilate 3,4-dioxygenase (bna1) of Neurospora crassa (strain ATCC 24698 / 74-OR23-1A / CBS 708.71 / DSM 1257 / FGSC 987).